Consider the following 207-residue polypeptide: Thymidylate kinase (207 aa).

ATP is bound at residue 7-14 (GCEGTGKT).

This sequence belongs to the thymidylate kinase family.

It carries out the reaction dTMP + ATP = dTDP + ADP. Its function is as follows. Phosphorylation of dTMP to form dTDP in both de novo and salvage pathways of dTTP synthesis. This chain is Thymidylate kinase, found in Onion yellows phytoplasma (strain OY-M).